Here is a 502-residue protein sequence, read N- to C-terminus: ATP synthase subunit alpha (502 aa).

169-176 is an ATP binding site; the sequence is GDRQTGKT.

The protein belongs to the ATPase alpha/beta chains family. In terms of assembly, F-type ATPases have 2 components, CF(1) - the catalytic core - and CF(0) - the membrane proton channel. CF(1) has five subunits: alpha(3), beta(3), gamma(1), delta(1), epsilon(1). CF(0) has three main subunits: a(1), b(2) and c(9-12). The alpha and beta chains form an alternating ring which encloses part of the gamma chain. CF(1) is attached to CF(0) by a central stalk formed by the gamma and epsilon chains, while a peripheral stalk is formed by the delta and b chains.

Its subcellular location is the cell inner membrane. The enzyme catalyses ATP + H2O + 4 H(+)(in) = ADP + phosphate + 5 H(+)(out). Functionally, produces ATP from ADP in the presence of a proton gradient across the membrane. The alpha chain is a regulatory subunit. The protein is ATP synthase subunit alpha of Nitratidesulfovibrio vulgaris (strain DSM 19637 / Miyazaki F) (Desulfovibrio vulgaris).